The sequence spans 354 residues: Guanine nucleotide-binding protein G(i) subunit alpha-1 (354 aa).

Residue Gly2 is the site of N-myristoyl glycine attachment. Residue Cys3 is the site of S-palmitoyl cysteine attachment. The G-alpha domain maps to 32–354; that stretch reads REVKLLLLGA…KNNLKDCGLF (323 aa). The G1 motif stretch occupies residues 35 to 48; that stretch reads KLLLLGAGESGKST. Residues 43-48, 150-151, and 175-178 each bind GTP; these read ESGKST, DS, and LRTR. Ser47 serves as a coordination point for Mg(2+). The tract at residues 173–181 is G2 motif; sequence DVLRTRVKT. Thr181 contributes to the Mg(2+) binding site. The tract at residues 196–205 is G3 motif; the sequence is FKMFDVGGQR. Residues 200–204, 269–272, and Ala326 each bind GTP; these read DVGGQ and NKKD. The tract at residues 265-272 is G4 motif; sequence ILFLNKKD. Positions 324-329 are G5 motif; it reads TCATDT.

It belongs to the G-alpha family. G(i/o/t/z) subfamily. Heterotrimeric G proteins are composed of 3 units; alpha, beta and gamma. The alpha chain contains the guanine nucleotide binding site. Part of a spindle orientation complex. Identified in complex with the beta subunit GNB1 and the gamma subunit GNG1. Identified in complex with the beta subunit GNB1 and the gamma subunit GNG2. GTP binding causes dissociation of the heterotrimer, liberating the individual subunits so that they can interact with downstream effector proteins. In terms of processing, myristoylation at Gly-2 is required for membrane anchoring before palmitoylation. Palmitoylation at Cys-3 varies with membrane lipid composition.

Its subcellular location is the nucleus. The protein localises to the cytoplasm. It is found in the cell membrane. The protein resides in the cytoskeleton. It localises to the microtubule organizing center. Its subcellular location is the centrosome. The protein localises to the cell cortex. It is found in the membrane. It catalyses the reaction GTP + H2O = GDP + phosphate + H(+). Guanine nucleotide-binding proteins (G proteins) function as transducers downstream of G protein-coupled receptors (GPCRs) in numerous signaling cascades. The alpha chain contains the guanine nucleotide binding site and alternates between an active, GTP-bound state and an inactive, GDP-bound state. Signaling by an activated GPCR promotes GDP release and GTP binding. The alpha subunit has a low GTPase activity that converts bound GTP to GDP, thereby terminating the signal. Both GDP release and GTP hydrolysis are modulated by numerous regulatory proteins. Signaling is mediated via effector proteins, such as adenylate cyclase. Inhibits adenylate cyclase activity of ADCY1, ADCY5 and ADCY6, leading to decreased intracellular cAMP levels. Required for cortical dynein-dynactin complex recruitment during metaphase. In Gallus gallus (Chicken), this protein is Guanine nucleotide-binding protein G(i) subunit alpha-1 (GNAI1).